A 187-amino-acid polypeptide reads, in one-letter code: Acireductone dioxygenase 4 (187 aa).

N-acetylalanine is present on A2. Fe(2+) is bound by residues H89, H91, E95, and H134. Residues H89, H91, E95, and H134 each contribute to the Ni(2+) site.

This sequence belongs to the acireductone dioxygenase (ARD) family. Fe(2+) is required as a cofactor. It depends on Ni(2+) as a cofactor.

It is found in the cytoplasm. It localises to the nucleus. The enzyme catalyses 1,2-dihydroxy-5-(methylsulfanyl)pent-1-en-3-one + O2 = 4-methylsulfanyl-2-oxobutanoate + formate + 2 H(+). It catalyses the reaction 1,2-dihydroxy-5-(methylsulfanyl)pent-1-en-3-one + O2 = 3-(methylsulfanyl)propanoate + CO + formate + 2 H(+). The protein operates within amino-acid biosynthesis; L-methionine biosynthesis via salvage pathway; L-methionine from S-methyl-5-thio-alpha-D-ribose 1-phosphate: step 5/6. Functionally, catalyzes 2 different reactions between oxygen and the acireductone 1,2-dihydroxy-3-keto-5-methylthiopentene (DHK-MTPene) depending upon the metal bound in the active site. Fe-containing acireductone dioxygenase (Fe-ARD) produces formate and 2-keto-4-methylthiobutyrate (KMTB), the alpha-ketoacid precursor of methionine in the methionine recycle pathway. Ni-containing acireductone dioxygenase (Ni-ARD) produces methylthiopropionate, carbon monoxide and formate, and does not lie on the methionine recycle pathway. The chain is Acireductone dioxygenase 4 (ARD4) from Arabidopsis thaliana (Mouse-ear cress).